The primary structure comprises 633 residues: Hyphal wall protein 1 (633 aa).

A signal peptide spans 1–27 (MRLSTAQLIAIAYYMLSIGATVPQVDG). 2 disordered regions span residues 40–306 (SYDY…TTTT) and 411–569 (CPLT…SGAI). A compositionally biased stretch (low complexity) spans 42 to 114 (DYYQEPCDDY…DYPQQPQEPC (73 aa)). Residues 46–58 (EPCDDYPQQQQQQ) form a 1; approximate repeat. A 14 X 10 AA tandem repeats of [EVIQ]-P-[CDT]-D-[YNW]-P-[PQ]-[QI]-[QP]-[QDN] region spans residues 46–187 (EPCDDYPQQQ…PNIPTDWIPD (142 aa)). A 2; approximate repeat occupies 59–69 (EPCDYPQQQQQ). The 3; approximate repeat unit spans residues 70 to 81 (EEPCDYPQQQPQ). 9 repeat units span residues 82-91 (EPCDYPQQPQ), 92-101 (EPCDYPQQPQ), 102-111 (EPCDYPQQPQ), 112-121 (EPCDNPPQPD), 122-131 (VPCDNPPQPD), 132-141 (VPCDNPPQPD), 142-151 (IPCDNPPQPD), 152-161 (IPCDNPPQPD), and 162-171 (QPDDNPPIPN). Residues 115 to 171 (DNPPQPDVPCDNPPQPDVPCDNPPQPDIPCDNPPQPDIPCDNPPQPDQPDDNPPIPN) are compositionally biased toward pro residues. Residues 172–179 (IPTDWIPN) form a 13; truncated repeat. Composition is skewed to low complexity over residues 172-183 (IPTDWIPNIPTD) and 193-306 (TTPA…TTTT). The 14; truncated repeat unit spans residues 180-187 (IPTDWIPD). N-linked (GlcNAc...) asparagine glycans are attached at residues Asn-240 and Asn-285. A compositionally biased stretch (polar residues) spans 414 to 425 (TENTPGTDSTPE). Residues 507 to 549 (ETKPAAPKSSAPATEPSPVAPGTESAPAGPGASSSPKSSVLAS) are compositionally biased toward low complexity. Asn-600 carries an N-linked (GlcNAc...) asparagine glycan. Gly-612 carries the GPI-anchor amidated glycine lipid modification. The propeptide at 613–633 (AGNNMRLTFGAAIIGIAAFLI) is removed in mature form.

The protein belongs to the HWP1 family. In terms of processing, the GPI-anchor is attached to the protein in the endoplasmic reticulum and serves to target the protein to the cell surface. There, the glucosamine-inositol phospholipid moiety is cleaved off and the GPI-modified mannoprotein is covalently attached via its lipidless GPI glycan remnant to the 1,6-beta-glucan of the outer cell wall layer. N- and O-glycosylated.

It localises to the secreted. The protein localises to the cell wall. Its subcellular location is the membrane. Its function is as follows. Major hyphal cell wall protein which plays a role of adhesin and is required for mating, normal hyphal development, cell-to-cell adhesive functions necessary for biofilm integrity, attachment to host, and virulence. Promotes interactions with host and bacterial molecules, thus leading to effective colonization within polymicrobial communities. Plays a crucial role in gastrointestinal colonization, in mucosal symptomatic and asymptomatic infections, in vaginitis, as well as in lethal oroesophageal candidiasis, caused by the combined action of fungal virulence factors and host inflammatory responses when protective immunity is absent. This chain is Hyphal wall protein 1, found in Candida albicans (strain WO-1) (Yeast).